Reading from the N-terminus, the 1358-residue chain is Phosphoinositide 3-kinase regulatory subunit 4 (1358 aa).

G2 carries N-myristoyl glycine lipidation. A Protein kinase domain is found at 26-324; it reads FEYDKSLGST…AFPEIFYTFL (299 aa). ATP is bound by residues 32–40 and K53; that span reads LGSTRFFKV. The Proton acceptor role is filled by D148. HEAT repeat units lie at residues 413 to 450, 458 to 495, and 572 to 610; these read ILLD…LVKE, IYPE…TALR, and KAND…YVGW. Residues S808, S813, S853, and S865 each carry the phosphoserine modification. The tract at residues 875–898 is disordered; the sequence is LPKGSDQEVIQTGKPPRSESSAGI. 6 WD repeats span residues 991–1030, 1040–1079, 1093–1134, 1139–1178, 1182–1223, and 1237–1278; these read EHKS…GKTT, RIGG…LPKS, KEDG…NAWT, LKSG…PISS, PSRA…RRFT, and PSPH…RSYV. The disordered stretch occupies residues 1307-1326; the sequence is KQKVGPSDDTPRRGPESLPV. Over residues 1315-1326 the composition is skewed to basic and acidic residues; that stretch reads DTPRRGPESLPV. T1316 bears the Phosphothreonine mark. Residues 1327 to 1358 form a WD 7 repeat; that stretch reads GHHDIITDVATFQTTQGFIVTASRDGIVKVWK.

It belongs to the protein kinase superfamily. Ser/Thr protein kinase family. Component of the PI3K (PI3KC3/PI3K-III/class III phosphatidylinositol 3-kinase) complex the core of which is composed of the catalytic subunit PIK3C3, the regulatory subunit PIK3R4 and BECN1 associating with additional regulatory/auxiliary subunits to form alternative complex forms. Alternative complex forms containing a fourth regulatory subunit in a mutually exclusive manner are PI3K complex I (PI3KC3-C1) containing ATG14, and PI3K complex II (PI3KC3-C2) containing UVRAG. PI3KC3-C1 displays a V-shaped architecture with PIK3R4 serving as a bridge between PIK3C3 and the ATG14:BECN1 subcomplex. Both, PI3KC3-C1 and PI3KC3-C2, can associate with further regulatory subunits, such as RUBCN, SH3GLB1/Bif-1, AMBRA1 and NRBF2. PI3KC3-C1 probably associates with PIK3CB. Interacts with RAB7A in the presence of PIK3C3/VPS34. Interacts with NRBF2. Interacts with ARMC3. Requires Mn(2+) as cofactor. In terms of processing, myristoylated. Probably autophosphorylated. Ubiquitously expressed.

The protein localises to the late endosome. The protein resides in the cytoplasmic vesicle. It is found in the autophagosome. It localises to the membrane. The enzyme catalyses L-seryl-[protein] + ATP = O-phospho-L-seryl-[protein] + ADP + H(+). The catalysed reaction is L-threonyl-[protein] + ATP = O-phospho-L-threonyl-[protein] + ADP + H(+). Its function is as follows. Regulatory subunit of the PI3K complex that mediates formation of phosphatidylinositol 3-phosphate; different complex forms are believed to play a role in multiple membrane trafficking pathways: PI3KC3-C1 is involved in initiation of autophagosomes and PI3KC3-C2 in maturation of autophagosomes and endocytosis. Involved in regulation of degradative endocytic trafficking and cytokinesis, probably in the context of PI3KC3-C2. The sequence is that of Phosphoinositide 3-kinase regulatory subunit 4 (PIK3R4) from Homo sapiens (Human).